The sequence spans 306 residues: Ribosomal protein L11 methyltransferase (306 aa).

The S-adenosyl-L-methionine site is built by T139, G173, D195, and N242.

This sequence belongs to the methyltransferase superfamily. PrmA family.

The protein resides in the cytoplasm. The catalysed reaction is L-lysyl-[protein] + 3 S-adenosyl-L-methionine = N(6),N(6),N(6)-trimethyl-L-lysyl-[protein] + 3 S-adenosyl-L-homocysteine + 3 H(+). Functionally, methylates ribosomal protein L11. The protein is Ribosomal protein L11 methyltransferase of Nostoc sp. (strain PCC 7120 / SAG 25.82 / UTEX 2576).